Consider the following 225-residue polypeptide: Cold-regulated 413 inner membrane protein 1, chloroplastic (225 aa).

Residues 1 to 76 (MASLCLSSSR…RKRGSSVVCY (76 aa)) constitute a chloroplast transit peptide. Position 77 (Ala77) is a topological domain, stromal. Residues 78–98 (APISANSLQWISTISCLALML) traverse the membrane as a helical segment. The Chloroplast intermembrane portion of the chain corresponds to 99–102 (ARGT). Residues 103 to 123 (GIHKSVVVPLFALHAPSSIVA) form a helical membrane-spanning segment. Residues 124 to 128 (WIKGE) are Stromal-facing. The chain crosses the membrane as a helical span at residues 129–149 (YGVWAAFLALIARLFFTFPGE). The Chloroplast intermembrane portion of the chain corresponds to 150 to 151 (LE). The chain crosses the membrane as a helical span at residues 152–172 (LPFIALLLVIVAPYQVMNIRG). Residues 173-175 (KQE) are Stromal-facing. A helical membrane pass occupies residues 176-196 (GAIIAIAISGFLAFQHFSRAG). The Chloroplast intermembrane segment spans residues 197–204 (SLEKAYEK). The helical transmembrane segment at 205 to 225 (GSVLATVAIIGVTVVSLLLLL) threads the bilayer.

The protein belongs to the Cold-regulated 413 protein family.

It localises to the plastid. It is found in the chloroplast inner membrane. This Arabidopsis thaliana (Mouse-ear cress) protein is Cold-regulated 413 inner membrane protein 1, chloroplastic (COR413IM1).